A 372-amino-acid chain; its full sequence is MEPAPSAGAELQPPLFANASDAYPSACPSAGANASGPPGARSASSLALAIAITALYSAVCAVGLLGNVLVMFGIVRYTKMKTATNIYIFNLALADALATSTLPFQSAKYLMETWPFGELLCKAVLSIDYYNMFTSIFTLTMMSVDRYIAVCHPVKALDFRTPAKAKLINICIWVLASGVGVPIMVMAVTRPRDGAVVCMLQFPSPSWYWDTVTKICVFLFAFVVPILIITVCYGLMLLRLRSVRLLSGSKEKDRSLRRITRMVLVVVGAFVVCWAPIHIFVIVWTLVDIDRRDPLVVAALHLCIALGYANSSLNPVLYAFLDENFKRCFRQLCRKPCGRPDPSSFSRAREATARERVTACTPSDGPGGGAAA.

Residues 1 to 47 are Extracellular-facing; the sequence is MEPAPSAGAELQPPLFANASDAYPSACPSAGANASGPPGARSASSLA. N-linked (GlcNAc...) asparagine glycosylation is found at asparagine 18 and asparagine 33. Residues 48–75 form a helical membrane-spanning segment; the sequence is LAIAITALYSAVCAVGLLGNVLVMFGIV. Topologically, residues 76–85 are cytoplasmic; the sequence is RYTKMKTATN. The chain crosses the membrane as a helical span at residues 86–110; the sequence is IYIFNLALADALATSTLPFQSAKYL. At 111-122 the chain is on the extracellular side; the sequence is METWPFGELLCK. A disulfide bridge links cysteine 121 with cysteine 198. A helical membrane pass occupies residues 123–144; sequence AVLSIDYYNMFTSIFTLTMMSV. Residues 145-163 are Cytoplasmic-facing; sequence DRYIAVCHPVKALDFRTPA. Residues 164–186 form a helical membrane-spanning segment; sequence KAKLINICIWVLASGVGVPIMVM. The Extracellular segment spans residues 187–206; the sequence is AVTRPRDGAVVCMLQFPSPS. A helical transmembrane segment spans residues 207 to 238; that stretch reads WYWDTVTKICVFLFAFVVPILIITVCYGLMLL. Topologically, residues 239-261 are cytoplasmic; the sequence is RLRSVRLLSGSKEKDRSLRRITR. The chain crosses the membrane as a helical span at residues 262 to 284; the sequence is MVLVVVGAFVVCWAPIHIFVIVW. Topologically, residues 285–299 are extracellular; that stretch reads TLVDIDRRDPLVVAA. A helical transmembrane segment spans residues 300-321; that stretch reads LHLCIALGYANSSLNPVLYAFL. Residues 322-372 are Cytoplasmic-facing; sequence DENFKRCFRQLCRKPCGRPDPSSFSRAREATARERVTACTPSDGPGGGAAA. The S-palmitoyl cysteine moiety is linked to residue cysteine 333. Residues 340-372 form a disordered region; the sequence is PDPSSFSRAREATARERVTACTPSDGPGGGAAA. Positions 347 to 357 are enriched in basic and acidic residues; it reads RAREATARERV.

This sequence belongs to the G-protein coupled receptor 1 family. As to quaternary structure, may form homooligomers. Forms a heterodimer with OPRM1. Interacts with GPRASP1. Interacts with RTP4; the interaction promotes cell surface localization of the OPRD1-OPRM1 heterodimer. N-glycosylated. Post-translationally, ubiquitinated. A basal ubiquitination seems not to be related to degradation. Ubiquitination is increased upon formation of OPRM1:OPRD1 oligomers leading to proteasomal degradation; the ubiquitination is diminished by RTP4. As to expression, detected in oocytes (at protein level). Detected in brain cortex, hypothalamus, hippocampus and olfactory bulb. Detected in oocytes.

It is found in the cell membrane. Functionally, G-protein coupled receptor that functions as a receptor for endogenous enkephalins and for a subset of other opioids. Ligand binding causes a conformation change that triggers signaling via guanine nucleotide-binding proteins (G proteins) and modulates the activity of down-stream effectors, such as adenylate cyclase. Signaling leads to the inhibition of adenylate cyclase activity. Inhibits neurotransmitter release by reducing calcium ion currents and increasing potassium ion conductance. Plays a role in the perception of pain and in opiate-mediated analgesia. Plays a role in developing analgesic tolerance to morphine. This is Delta-type opioid receptor (OPRD1) from Homo sapiens (Human).